Consider the following 167-residue polypeptide: Photosystem I assembly protein Ycf3 (167 aa).

3 TPR repeats span residues 35–68, 72–105, and 120–153; these read AFSYYRDGMSAQSEGEYAEALQNYYEALRLETDA, SYILYNIGLIHTSNGDHARALDYYYQALERNPSL, and GEQALESSQTEISKLLFDKAADYWREAIRLAPTN.

It belongs to the Ycf3 family.

Its subcellular location is the plastid. The protein resides in the chloroplast thylakoid membrane. Essential for the assembly of the photosystem I (PSI) complex. May act as a chaperone-like factor to guide the assembly of the PSI subunits. This chain is Photosystem I assembly protein Ycf3, found in Chlorella vulgaris (Green alga).